Consider the following 291-residue polypeptide: Probable cell wall amidase LytH (291 aa).

Residues 1–40 (MKKIDSWLTKHGLKNRLTLVVIVIFIIFLILLFMFVNLSD) form the signal peptide. Residues 41-105 (EDTGQITITE…WVAGWHTNLN (65 aa)) form the SH3b domain. The MurNAc-LAA domain maps to 122-286 (IVLDPGHGGS…VEQAIVDGLK (165 aa)). The tract at residues 123–147 (VLDPGHGGSDQGASSSTPSKSLEKN) is disordered. Polar residues predominate over residues 133 to 142 (QGASSSTPSK).

This sequence belongs to the N-acetylmuramoyl-L-alanine amidase 3 family.

The protein localises to the secreted. Functionally, probably involved in cell-wall metabolism. This Staphylococcus epidermidis (strain ATCC 35984 / DSM 28319 / BCRC 17069 / CCUG 31568 / BM 3577 / RP62A) protein is Probable cell wall amidase LytH (lytH).